The following is a 287-amino-acid chain: Glycine--tRNA ligase alpha subunit (287 aa).

This sequence belongs to the class-II aminoacyl-tRNA synthetase family. As to quaternary structure, tetramer of two alpha and two beta subunits.

It is found in the cytoplasm. The enzyme catalyses tRNA(Gly) + glycine + ATP = glycyl-tRNA(Gly) + AMP + diphosphate. The chain is Glycine--tRNA ligase alpha subunit from Campylobacter jejuni (strain RM1221).